The chain runs to 697 residues: Polyribonucleotide nucleotidyltransferase (697 aa).

2 residues coordinate Mg(2+): D486 and D492. Residues 553-612 (PRIHTIKIHPDKIKDVIGKCGSVIRALTEETKTIIDIEDDGTVTVAATDSIKAQQAICRI) enclose the KH domain. The S1 motif domain occupies 622 to 690 (GSIYHGKVTR…RQGRIRLSMK (69 aa)).

The protein belongs to the polyribonucleotide nucleotidyltransferase family. As to quaternary structure, component of the RNA degradosome, which is a multiprotein complex involved in RNA processing and mRNA degradation. The cofactor is Mg(2+).

It is found in the cytoplasm. It catalyses the reaction RNA(n+1) + phosphate = RNA(n) + a ribonucleoside 5'-diphosphate. Its function is as follows. Involved in mRNA degradation. Catalyzes the phosphorolysis of single-stranded polyribonucleotides processively in the 3'- to 5'-direction. This Baumannia cicadellinicola subsp. Homalodisca coagulata protein is Polyribonucleotide nucleotidyltransferase.